Consider the following 245-residue polypeptide: MNFFYYKDFYQLSEISVGQHYYWQISNFQVHGQTLMTSWFVISLIMIIAFLSNLNMKKIPLAKSFQNLAEFVTEFILDLARTQVGKEDYLNWVPFLGAVFLFIFVSNWGGALLPWKLLELPNGELAAPTNDINTTVALALLTSFSYFYAGISKKGISYFGRYVQPTPFLLPINVLEDFTKPLSLSFRLFGNLLADELVIAVLVSLVPLFVPVPLMLLGLFTSAIQALVFSTLAGAYIGESVEDHH.

5 helical membrane-spanning segments follow: residues 34 to 54 (TLMTSWFVISLIMIIAFLSNL), 93 to 113 (VPFLGAVFLFIFVSNWGGALL), 132 to 152 (INTTVALALLTSFSYFYAGIS), 197 to 217 (LVIAVLVSLVPLFVPVPLMLL), and 218 to 238 (GLFTSAIQALVFSTLAGAYIG).

It belongs to the ATPase A chain family. F-type ATPases have 2 components, CF(1) - the catalytic core - and CF(0) - the membrane proton channel. CF(1) has five subunits: alpha(3), beta(3), gamma(1), delta(1), epsilon(1). CF(0) has four main subunits: a, b, b' and c.

The protein localises to the plastid. The protein resides in the chloroplast thylakoid membrane. Its function is as follows. Key component of the proton channel; it plays a direct role in the translocation of protons across the membrane. In Bigelowiella natans (Pedinomonas minutissima), this protein is ATP synthase subunit a, chloroplastic.